Here is a 132-residue protein sequence, read N- to C-terminus: Pre-histone-like nucleoprotein (132 aa).

Residues 2–23 constitute a propeptide that is removed on maturation; the sequence is AILISPSNNTGWGLGTHKLFGG. Residues 124–132 carry the Nuclear localization signal motif; the sequence is RRKRRVRSK.

The protein belongs to the adenoviridae histone-like nucleoprotein family. Interacts with the core-capsid bridging protein; this interaction bridges the virus core to the capsid. Interacts with host NPM1; this interaction might play a role in placing the pre-histone-like nucleoprotein on the viral DNA or regulating viral gene expression. Interacts with host HMGB1; this interaction inhibits host immune response. Post-translationally, cleaved near the N-terminus by the viral protease during virion maturation to form the mature protein.

It localises to the virion. The protein resides in the host nucleus. The protein localises to the host nucleolus. Plays a role in the inhibition of host immune response within the nucleus. Interacts with cellular nucleosomes and immobilizes the host immune danger signal HMGB1 on chromatin. In turn, prevents HMGB1 release out of the cell and thus decreases inflammation. Also plays a role in the wrapping and condensation of the viral DNA. May also promote viral genome import into the nucleus. In Canine adenovirus serotype 1 (strain CLL) (CAdV-1), this protein is Pre-histone-like nucleoprotein.